Reading from the N-terminus, the 214-residue chain is tRNA (guanine-N(7)-)-methyltransferase (214 aa).

Positions 43, 68, 95, and 117 each coordinate S-adenosyl-L-methionine. Residue D117 is part of the active site. Residues K121, D153, and 190–193 contribute to the substrate site; that span reads TEYE.

It belongs to the class I-like SAM-binding methyltransferase superfamily. TrmB family.

The enzyme catalyses guanosine(46) in tRNA + S-adenosyl-L-methionine = N(7)-methylguanosine(46) in tRNA + S-adenosyl-L-homocysteine. The protein operates within tRNA modification; N(7)-methylguanine-tRNA biosynthesis. Catalyzes the formation of N(7)-methylguanine at position 46 (m7G46) in tRNA. In Staphylococcus aureus (strain COL), this protein is tRNA (guanine-N(7)-)-methyltransferase.